We begin with the raw amino-acid sequence, 374 residues long: DNA integrity scanning protein DisA (374 aa).

A DAC domain is found at 20-158; the sequence is DGLMRASLSA…DGMRRVLEDS (139 aa). ATP is bound by residues G87, L105, and 118 to 122; that span reads TRHRT.

Belongs to the DisA family. Homooctamer. Mg(2+) serves as cofactor.

It carries out the reaction 2 ATP = 3',3'-c-di-AMP + 2 diphosphate. In terms of biological role, participates in a DNA-damage check-point that is active prior to asymmetric division when DNA is damaged. DisA forms globular foci that rapidly scan along the chromosomes during sporulation, searching for lesions. When a lesion is present, DisA pauses at the lesion site. This triggers a cellular response that culminates in a temporary block in sporulation initiation. Functionally, also has diadenylate cyclase activity, catalyzing the condensation of 2 ATP molecules into cyclic di-AMP (c-di-AMP). c-di-AMP acts as a signaling molecule that couples DNA integrity with progression of sporulation. The rise in c-di-AMP level generated by DisA while scanning the chromosome, operates as a positive signal that advances sporulation; upon encountering a lesion, the DisA focus arrests at the damaged site and halts c-di-AMP synthesis. In Streptomyces avermitilis (strain ATCC 31267 / DSM 46492 / JCM 5070 / NBRC 14893 / NCIMB 12804 / NRRL 8165 / MA-4680), this protein is DNA integrity scanning protein DisA.